The sequence spans 261 residues: RING finger and CHY zinc finger domain-containing protein 1 (261 aa).

The CHY-type zinc finger occupies 13–80 (LAQGPRGCEH…AQQTCEDCST (68 aa)). Zn(2+)-binding residues include Cys-20, His-22, Cys-33, Cys-34, Cys-40, Cys-43, His-44, His-50, Cys-62, Cys-65, Cys-75, Cys-78, Cys-87, Cys-90, His-101, Cys-102, Cys-105, Cys-108, His-118, Cys-119, Cys-122, Cys-125, His-134, and Cys-136. The CTCHY-type zinc finger occupies 82–144 (FGEYYCSICH…KCIENVSRQN (63 aa)). An RING-type zinc finger spans residues 145-189 (CPICLEDIHTSRVVAHVLPCGHLLHRTCYEEMLKEGYRCPLCMHS).

Monomer and homodimer. Interacts with AR, MDM2, KAT5, PLAG1, PLAGL2, COPE, UBE2D2 and GORAB/NTKLBP1. Post-translationally, subject to ubiquitination and proteasomal degradation. Interaction with PLAGL2 or KAT5 enhances protein stability. In terms of tissue distribution, detected in testis, liver, kidney and heart.

Its subcellular location is the nucleus. It is found in the nucleus speckle. The protein resides in the cytoplasm. It catalyses the reaction S-ubiquitinyl-[E2 ubiquitin-conjugating enzyme]-L-cysteine + [acceptor protein]-L-lysine = [E2 ubiquitin-conjugating enzyme]-L-cysteine + N(6)-ubiquitinyl-[acceptor protein]-L-lysine.. It functions in the pathway protein modification; protein ubiquitination. Its function is as follows. E3 ubiquitin-protein ligase that mediates ubiquitination of target proteins, including p53/TP53, TP73, HDAC1 and CDKN1B. Mediates ubiquitination and degradation of p53/TP53; preferentially acts on tetrameric p53/TP53. Catalyzes monoubiquitinates the translesion DNA polymerase POLH. Involved in the ribosome-associated quality control (RQC) pathway, which mediates the extraction of incompletely synthesized nascent chains from stalled ribosomes: RCHY1 acts downstream of NEMF and recognizes CAT tails associated with stalled nascent chains, leading to their ubiquitination and degradation. In Mus musculus (Mouse), this protein is RING finger and CHY zinc finger domain-containing protein 1 (Rchy1).